A 225-amino-acid polypeptide reads, in one-letter code: Small ribosomal subunit protein uS3 (225 aa).

One can recognise a KH type-2 domain in the interval 16-85 (VYEYLVKETE…TPQIEVKDVK (70 aa)). Positions 200–225 (GENVGTESETDKADEQGREAANTEES) are disordered. Basic and acidic residues predominate over residues 208–217 (ETDKADEQGR).

This sequence belongs to the universal ribosomal protein uS3 family. In terms of assembly, part of the 30S ribosomal subunit.

Binds the lower part of the 30S subunit head. This Thermoplasma volcanium (strain ATCC 51530 / DSM 4299 / JCM 9571 / NBRC 15438 / GSS1) protein is Small ribosomal subunit protein uS3.